Consider the following 101-residue polypeptide: Synaptobrevin-B (101 aa).

Residues 1–76 are Cytoplasmic-facing; that stretch reads MSNNPNNSGQ…RRQMWCRNMK (76 aa). Positions 13–73 constitute a v-SNARE coiled-coil homology domain; sequence KTQSILQEVD…VTIRRQMWCR (61 aa). The helical; Anchor for type IV membrane protein transmembrane segment at 77-97 threads the bilayer; that stretch reads LQLIIIAVVILVLAVILIPII. The Vesicular segment spans residues 98–101; it reads MKFV.

It belongs to the synaptobrevin family.

The protein resides in the cytoplasmic vesicle. The protein localises to the secretory vesicle membrane. In terms of biological role, involved in the targeting and/or fusion of transport vesicles to their target membrane. This chain is Synaptobrevin-B (sybB), found in Dictyostelium discoideum (Social amoeba).